The sequence spans 88 residues: Small ribosomal subunit protein uS19 (88 aa).

The protein belongs to the universal ribosomal protein uS19 family.

In terms of biological role, protein S19 forms a complex with S13 that binds strongly to the 16S ribosomal RNA. The sequence is that of Small ribosomal subunit protein uS19 (rpsS) from Mycoplasma capricolum subsp. capricolum (strain California kid / ATCC 27343 / NCTC 10154).